Here is a 149-residue protein sequence, read N- to C-terminus: Pleckstrin homology domain-containing family J member 1 (149 aa).

One can recognise a PH domain in the interval 15–108; sequence PAEKAAEILM…WIEALKRASY (94 aa).

The chain is Pleckstrin homology domain-containing family J member 1 (PLEKHJ1) from Gallus gallus (Chicken).